The sequence spans 32 residues: PRRRRSSSRPVRRRRARRVSRRRRRRGGRRRR.

The disordered stretch occupies residues 1-32 (PRRRRSSSRPVRRRRARRVSRRRRRRGGRRRR).

In terms of tissue distribution, testis.

The protein resides in the nucleus. Its subcellular location is the chromosome. Its function is as follows. Protamines substitute for histones in the chromatin of sperm during the haploid phase of spermatogenesis. They compact sperm DNA into a highly condensed, stable and inactive complex. This Oncorhynchus mykiss (Rainbow trout) protein is Protamine-2.